A 133-amino-acid polypeptide reads, in one-letter code: Small ribosomal subunit protein uS8 (133 aa).

It belongs to the universal ribosomal protein uS8 family. Part of the 30S ribosomal subunit. Contacts proteins S5 and S12.

Its function is as follows. One of the primary rRNA binding proteins, it binds directly to 16S rRNA central domain where it helps coordinate assembly of the platform of the 30S subunit. In Chlorobaculum parvum (strain DSM 263 / NCIMB 8327) (Chlorobium vibrioforme subsp. thiosulfatophilum), this protein is Small ribosomal subunit protein uS8.